A 198-amino-acid polypeptide reads, in one-letter code: Molybdopterin synthase catalytic subunit (198 aa).

The span at 1-27 shows a compositional bias: low complexity; the sequence is MASQPPQEPTPTATSTPSTSALASLPP. Positions 1-40 are disordered; that stretch reads MASQPPQEPTPTATSTPSTSALASLPPHLDPTTYPRTLTS. Substrate is bound by residues 143 to 144, Lys-159, and 166 to 168; these read HR and KRE. A disordered region spans residues 176-198; sequence EWRENRERDAEGKVVAEKQEERE.

The protein belongs to the MoaE family. MOCS2B subfamily. In terms of assembly, heterotetramer; composed of 2 small (MOCS2A) and 2 large (MOCS2B) subunits.

Its subcellular location is the cytoplasm. It catalyses the reaction 2 [molybdopterin-synthase sulfur-carrier protein]-C-terminal-Gly-aminoethanethioate + cyclic pyranopterin phosphate + H2O = molybdopterin + 2 [molybdopterin-synthase sulfur-carrier protein]-C-terminal Gly-Gly + 2 H(+). Its pathway is cofactor biosynthesis; molybdopterin biosynthesis. Catalytic subunit of the molybdopterin synthase complex, a complex that catalyzes the conversion of precursor Z into molybdopterin. Acts by mediating the incorporation of 2 sulfur atoms from thiocarboxylated MOCS2A into precursor Z to generate a dithiolene group. The polypeptide is Molybdopterin synthase catalytic subunit (Aspergillus clavatus (strain ATCC 1007 / CBS 513.65 / DSM 816 / NCTC 3887 / NRRL 1 / QM 1276 / 107)).